Here is a 421-residue protein sequence, read N- to C-terminus: Proton/sodium-glutamate symport protein (421 aa).

At 1–3 the chain is on the cytoplasmic side; sequence MRK. A helical membrane pass occupies residues 4 to 24; that stretch reads IGLAWQIFIGLILGIIVGAIF. At 25–43 the chain is on the extracellular side; it reads YGNPKVAAYLQPIGDIFLR. A helical transmembrane segment spans residues 44 to 64; sequence LIKMIVIPIVISSLVVGVASV. At 65–77 the chain is on the cytoplasmic side; that stretch reads GDLKKLGKLGGKT. Residues 78 to 98 traverse the membrane as a helical segment; sequence IIYFEIITTIAIVVGLLAANI. At 99 to 148 the chain is on the extracellular side; sequence FQPGAGVNMKSLEKTDIQSYVDTTNEVQHHSMVETFVNIVPKNIFESLST. Residues 149–169 traverse the membrane as a helical segment; it reads GDMLPIIFFSVMFGLGVAAIG. The Cytoplasmic portion of the chain corresponds to 170-198; that stretch reads EKGKPVLQFFQGTAEAMFYVTNQIMKFAP. Residues 199–219 traverse the membrane as a helical segment; sequence FGVFALIGVTVSKFGVESLIP. Residues 220 to 222 are Extracellular-facing; that stretch reads LSK. Residues 223–243 form a helical membrane-spanning segment; the sequence is LVIVVYATMLFFIFAVLGGVA. A topological domain (cytoplasmic) is located at residue K244. The chain crosses the membrane as a helical span at residues 245-265; the sequence is LFGINIFHIIKILKDELILAY. Over 266–306 the chain is Extracellular; sequence STASSETVLPRIMDKMEKFGCPKAITSFVIPTGYSFNLDGS. A helical transmembrane segment spans residues 307 to 327; that stretch reads TLYQALAAIFIAQLYGIDMSV. The Cytoplasmic portion of the chain corresponds to 328 to 330; the sequence is SQQ. A run of 2 helical transmembrane segments spans residues 331-351 and 352-372; these read ISLL…PGVS and FVVL…LAFI. The Cytoplasmic segment spans residues 373–421; that stretch reads AGIDRILDMARTAVNVIGNSLAAIIMSKWEGQYNEEKGKQYLAELQQSA.

The protein belongs to the dicarboxylate/amino acid:cation symporter (DAACS) (TC 2.A.23) family. In terms of assembly, homotrimer.

The protein localises to the cell membrane. This carrier protein is part of the Na(+)-dependent, binding-protein-independent glutamate-aspartate transport system. The chain is Proton/sodium-glutamate symport protein (gltT) from Bacillus caldotenax.